The sequence spans 459 residues: MPWSEVSPGHFQRPLGANEKFIKSIGDRAHPLGREHWSVTAQARFKTSDALQGGQERVPELHKAWKTMRFAHPSIASIANAETLDYYVPSPDGLEDWMQQTFFVVEEDTSSQQYIASLQPSPYLTAHYLVRTSELILHTAHWRTDGFGAMQLVNAFFEAFAGLDDRDPIDLPWGQEVARLVPSIEEVLDLPEEATPEIKAATAECMATLALTRGAVGVSYQGDLTTLPAGTHSVQGRLSQSETKAIEEACCTRGISLLSAVHASVAATTYAGASSEAKSKPYTSTMRFNLRPYVPEPYSSPAYASALYTGGYMVQVPATHSWTENVREYNSAYRRGLSKGFLRARREYALNVQELLKKNIAMDGPPPSEVDISSIDDAELLVRPVYHGKSGDVEILDVSIGVETLTRQLYCFVWTFRGQLGFNLVYNEAYYNLTTATVLLDTLKNVLLTELGIRDDRAI.

Belongs to the trichothecene O-acetyltransferase family.

It functions in the pathway secondary metabolite biosynthesis. Its function is as follows. Acetyltransferase; part of the gene cluster that mediates the biosynthesis of azaphilone pigments (MonAzPs), a complex mixture of compounds with a common azaphilone skeleton very widely used as food colorants. PigM and pigO are involved in the elimination of the omega-1 alcohol with pigM acting as an O-acetyltransferase that synthesizes the O-11 acetyl intermediate whereas pigO eliminates acetic acid to yield an intermediate with a C10(11) double bond. The first step of the pathway is performed by the nrPKS pigA that forms the hexaketide precursor from successive condensations of five malonyl-CoA units, with a simple acetyl-CoA starter unit. The role of esterase pigG is not clear, but it may play at most a supplementary role in the formation of the benzaldehyde produced by the pigA nrPKS. This very reactive benzaldehyde is intercepted by the pigC ketoreductase that to provide the first stable enzyme-free MonAzPs intermediate, 6-(4-hydroxy-2-oxopentyl)-3-methyl-2,4-dioxocyclohexane carbaldehyde, also known as M7PKS-1. The FAD-dependent monooxygenase pigN hydroxylates M7PKS-1 at C-4, which triggers the formation of the pyran ring. PigJ, pigK and pigD are involved in the acetylation of the pyran ring. PigJ and pigK form the two subunits of a dedicated fungal FAS that produces the side chain fatty acyl moiety of MonAzPs and pigD transfers the fatty acyl chain to the C-4 alcohol. PigM and pigO are involved in the elimination of the omega-1 alcohol. PigM acts as an O-acetyltransferase that synthesizes the putative O-11 acetyl intermediate whereas pigO eliminates acetic acid to yield an intermediate with a C10(11) double bond. The dehydration of the C-11 alcohol followed by the reduction of the C6(7) double bond by the NAD(P)H-dependent oxidoreductase pigE increases the electrophilicity of the C-5 ketone of the resulting acyl benzopyran. This in turn sets up the C-5 ketone for an intramolecular Knoevenagel aldol condensation with the C-20 enol of the side chain. This condensation affords the characteristic linear tricyclic carbon skeletons of the yellow pigments that serve as the common precursors for the classical yellow pigments monascin and ankaflavin, orange pigments rubopunctatin and monascorubrin, and red pigments ribropunctamine and monascorubramine. The FAD-dependent oxidoreductase pigF is especially invoved in the biosynthesis of orange and red pigments via desaturation of C6(7). This is Acetyltransferase pigO from Monascus ruber (Mold).